The following is a 466-amino-acid chain: Probable agmatine/putrescine antiporter AguD (466 aa).

12 consecutive transmembrane segments (helical) span residues 8 to 28, 30 to 50, 85 to 105, 120 to 140, 144 to 164, 192 to 212, 226 to 246, 273 to 293, 325 to 345, 350 to 370, 398 to 418, and 426 to 446; these read FSLF…EAAA, VAAI…AFLL, ASWF…VLCP, ISLL…LYPV, VWIL…LGGL, LSFI…CTFA, IIIG…GIGV, WFIS…MVSW, WGAA…APLL, LFWS…IPVF, VYMA…AIPL, and TEQL…ELII.

The protein belongs to the amino acid-polyamine-organocation (APC) superfamily. Glutamate:GABA antiporter (GGA) (TC 2.A.3.7) family.

The protein resides in the cell membrane. Probably catalyzes agmatine/putrescine exchange. The polypeptide is Probable agmatine/putrescine antiporter AguD (Lactococcus lactis subsp. lactis (strain IL1403) (Streptococcus lactis)).